The sequence spans 72 residues: PI-stichotoxin-Hcr2k (72 aa).

Residues 1 to 9 (GFYFRSIQG) form the signal peptide. Positions 10-16 (FYFKRIQ) are excised as a propeptide. Residues 20-70 (CSEPKKVGRCRRSFPRFYFDSETGKCTPFIYGGCGGNGNNFETLHACRAIC) form the BPTI/Kunitz inhibitor domain. 3 disulfide bridges follow: cysteine 20–cysteine 70, cysteine 29–cysteine 53, and cysteine 45–cysteine 66.

This sequence belongs to the venom Kunitz-type family. Sea anemone type 2 potassium channel toxin subfamily.

It localises to the nematocyst. The protein localises to the secreted. In terms of biological role, serine protease inhibitor that also shows protective effect in a cytotoxicity model. It inhibits the serine protease trypsin (Ki=630 nM). It significantly increases neuroblastoma cell viability in an in vitro neurotoxicity model, being a consequence of an effective decrease of reactive oxygen species (ROS) level in the cells. It also seems to protect cells by inhibiting ATP-induced purinoceptor (P2RX7) activation. This is PI-stichotoxin-Hcr2k from Radianthus crispa (Leathery sea anemone).